A 162-amino-acid chain; its full sequence is NADH-quinone oxidoreductase subunit I (162 aa).

4Fe-4S ferredoxin-type domains lie at 54–83 (RRYE…IESE) and 93–122 (TRYD…ETQI). [4Fe-4S] cluster contacts are provided by Cys-63, Cys-66, Cys-69, Cys-73, Cys-102, Cys-105, Cys-108, and Cys-112.

Belongs to the complex I 23 kDa subunit family. As to quaternary structure, NDH-1 is composed of 14 different subunits. Subunits NuoA, H, J, K, L, M, N constitute the membrane sector of the complex. The cofactor is [4Fe-4S] cluster.

Its subcellular location is the cell inner membrane. It catalyses the reaction a quinone + NADH + 5 H(+)(in) = a quinol + NAD(+) + 4 H(+)(out). In terms of biological role, NDH-1 shuttles electrons from NADH, via FMN and iron-sulfur (Fe-S) centers, to quinones in the respiratory chain. The immediate electron acceptor for the enzyme in this species is believed to be ubiquinone. Couples the redox reaction to proton translocation (for every two electrons transferred, four hydrogen ions are translocated across the cytoplasmic membrane), and thus conserves the redox energy in a proton gradient. The protein is NADH-quinone oxidoreductase subunit I of Burkholderia thailandensis (strain ATCC 700388 / DSM 13276 / CCUG 48851 / CIP 106301 / E264).